The primary structure comprises 566 residues: Phosphatidylinositol 3,4,5-trisphosphate 3-phosphatase TPTE2 (566 aa).

Helical transmembrane passes span 135–155 (SFAF…LLLA), 173–193 (ISLA…FVEG), 208–228 (AIIV…IKFL), and 234–254 (WIHL…HLIH). The 177-residue stretch at 272–448 (RRYTRDGFDL…GYFAQVKHLY (177 aa)) folds into the Phosphatase tensin-type domain. Cys-382 functions as the Phosphocysteine intermediate in the catalytic mechanism. Positions 455 to 566 (RRILFIKRFI…ILHSFRLVFT (112 aa)) constitute a C2 tensin-type domain.

The protein localises to the endoplasmic reticulum membrane. The protein resides in the golgi apparatus membrane. It catalyses the reaction a 1,2-diacyl-sn-glycero-3-phospho-(1D-myo-inositol-3,4,5-trisphosphate) + H2O = a 1,2-diacyl-sn-glycero-3-phospho-(1D-myo-inositol-4,5-bisphosphate) + phosphate. In terms of biological role, acts as a lipid phosphatase, removing the phosphate in the D3 position of the inositol ring from phosphatidylinositol 3,4,5-trisphosphate. The chain is Phosphatidylinositol 3,4,5-trisphosphate 3-phosphatase TPTE2 (TPTE2) from Macaca fascicularis (Crab-eating macaque).